The primary structure comprises 430 residues: Enolase (430 aa).

A (2R)-2-phosphoglycerate-binding site is contributed by Q163. E205 serves as the catalytic Proton donor. Residues D242, E287, and D314 each coordinate Mg(2+). K339, R368, S369, and K390 together coordinate (2R)-2-phosphoglycerate. Catalysis depends on K339, which acts as the Proton acceptor.

It belongs to the enolase family. The cofactor is Mg(2+).

Its subcellular location is the cytoplasm. It localises to the secreted. The protein localises to the cell surface. It catalyses the reaction (2R)-2-phosphoglycerate = phosphoenolpyruvate + H2O. The protein operates within carbohydrate degradation; glycolysis; pyruvate from D-glyceraldehyde 3-phosphate: step 4/5. Functionally, catalyzes the reversible conversion of 2-phosphoglycerate (2-PG) into phosphoenolpyruvate (PEP). It is essential for the degradation of carbohydrates via glycolysis. In Exiguobacterium sp. (strain ATCC BAA-1283 / AT1b), this protein is Enolase.